A 329-amino-acid chain; its full sequence is 36 kDa antigen (329 aa).

Residues 11 to 31 (AILTGGGALLLGLIVLFYLAY) form a helical membrane-spanning segment.

The protein belongs to the membrane fusion protein (MFP) (TC 8.A.1) family.

The protein localises to the membrane. In Helicobacter pylori (strain J99 / ATCC 700824) (Campylobacter pylori J99), this protein is 36 kDa antigen.